The primary structure comprises 305 residues: Acetylglutamate kinase (305 aa).

Substrate is bound by residues glycine 75 to glycine 76, arginine 97, and asparagine 202.

Belongs to the acetylglutamate kinase family. ArgB subfamily.

The protein localises to the cytoplasm. It catalyses the reaction N-acetyl-L-glutamate + ATP = N-acetyl-L-glutamyl 5-phosphate + ADP. The protein operates within amino-acid biosynthesis; L-arginine biosynthesis; N(2)-acetyl-L-ornithine from L-glutamate: step 2/4. Functionally, catalyzes the ATP-dependent phosphorylation of N-acetyl-L-glutamate. This Rhodospirillum centenum (strain ATCC 51521 / SW) protein is Acetylglutamate kinase.